Reading from the N-terminus, the 122-residue chain is Large ribosomal subunit protein bL12 (122 aa).

Belongs to the bacterial ribosomal protein bL12 family. As to quaternary structure, homodimer. Part of the ribosomal stalk of the 50S ribosomal subunit. Forms a multimeric L10(L12)X complex, where L10 forms an elongated spine to which 2 to 4 L12 dimers bind in a sequential fashion. Binds GTP-bound translation factors.

Functionally, forms part of the ribosomal stalk which helps the ribosome interact with GTP-bound translation factors. Is thus essential for accurate translation. This is Large ribosomal subunit protein bL12 from Buchnera aphidicola subsp. Schizaphis graminum (strain Sg).